The primary structure comprises 190 residues: Potassium-transporting ATPase KdpC subunit (190 aa).

Residues 10-30 traverse the membrane as a helical segment; the sequence is TFLFLLLITGGVYPLLTTALG.

This sequence belongs to the KdpC family. The system is composed of three essential subunits: KdpA, KdpB and KdpC.

The protein resides in the cell inner membrane. In terms of biological role, part of the high-affinity ATP-driven potassium transport (or Kdp) system, which catalyzes the hydrolysis of ATP coupled with the electrogenic transport of potassium into the cytoplasm. This subunit acts as a catalytic chaperone that increases the ATP-binding affinity of the ATP-hydrolyzing subunit KdpB by the formation of a transient KdpB/KdpC/ATP ternary complex. The protein is Potassium-transporting ATPase KdpC subunit of Escherichia coli O45:K1 (strain S88 / ExPEC).